A 114-amino-acid chain; its full sequence is SATSLTFQLAYLVKKIDFDYTPNWGRGTPSSYIDNLTFPKVLTDKKYSYRVVVNGSDLGVESNFAVTPSGGQTINFLQYNKGYGVADTKTIQVFVVIPDTGNSEEYIIAEWKKT.

N-acetylserine is present on Ser1.

It belongs to the fungal immunomodulatory protein (FIP) family. As to quaternary structure, homodimer.

Functionally, lectin with specificity for complex cell-surface carbohydrates. Possesses immunomodulatory activity, stimulates lymphocyte mitogenesis, suppresses systemic anaphylaxis reactions and edema, enhances transcription of IL-2, IFN-gamma and TNF-alpha and hemagglutinates red blood cells. The chain is Immunomodulatory protein FIP-Fve from Flammulina velutipes (Agaricus velutipes).